The primary structure comprises 329 residues: MTAANQETILELRDVKKYFPIRSGLFQRKVGDVKAVDGVSFSLKKGETLGIVGESGCGKSTAGRTMIRLYKPTEGQILFKGQDISNLSEEKLRKSVRKNIQMVFQDPFASLNPRKTLRSIIKEPFNTHNMYTMRERNEKVEELLARVGLHPSFAGRYPHEFSGGQRQRIGIARALTLNPELIIADEPVSALDVSIQAQVINLMEELQEEFNLTYLFISHDLSVVRHISDRVGVMYLGKMMELTGKHELYDNPLHPYTQALLSSVPVTRKRGSVKRERIVLKGELPSPANPPKGCVFHTRCPVAKPICKEQIPEFKEAAPSHFVACHLYS.

In terms of domain architecture, ABC transporter spans 10–261 (LELRDVKKYF…PLHPYTQALL (252 aa)). Residue 53-60 (GESGCGKS) participates in ATP binding.

The protein belongs to the ABC transporter superfamily.

It localises to the cell membrane. This protein is a component of an oligopeptide permease, a binding protein-dependent transport system. This APP system can completely substitute for the OPP system in both sporulation and genetic competence, though, unlike OPP, is incapable of transporting tripeptides. Probably responsible for energy coupling to the transport system. This Bacillus subtilis (strain 168) protein is Oligopeptide transport ATP-binding protein AppF (appF).